The primary structure comprises 384 residues: 4-hydroxy-3-methylbut-2-en-1-yl diphosphate synthase (flavodoxin) (384 aa).

4 residues coordinate [4Fe-4S] cluster: Cys-272, Cys-275, Cys-307, and Glu-314.

The protein belongs to the IspG family. [4Fe-4S] cluster is required as a cofactor.

It carries out the reaction (2E)-4-hydroxy-3-methylbut-2-enyl diphosphate + oxidized [flavodoxin] + H2O + 2 H(+) = 2-C-methyl-D-erythritol 2,4-cyclic diphosphate + reduced [flavodoxin]. It participates in isoprenoid biosynthesis; isopentenyl diphosphate biosynthesis via DXP pathway; isopentenyl diphosphate from 1-deoxy-D-xylulose 5-phosphate: step 5/6. Its function is as follows. Converts 2C-methyl-D-erythritol 2,4-cyclodiphosphate (ME-2,4cPP) into 1-hydroxy-2-methyl-2-(E)-butenyl 4-diphosphate. The protein is 4-hydroxy-3-methylbut-2-en-1-yl diphosphate synthase (flavodoxin) of Rhodospirillum rubrum (strain ATCC 11170 / ATH 1.1.1 / DSM 467 / LMG 4362 / NCIMB 8255 / S1).